Reading from the N-terminus, the 275-residue chain is Polyamine aminopropyltransferase (275 aa).

Residues 2 to 235 enclose the PABS domain; the sequence is ELWFTEKQTK…GLWTFTIGSK (234 aa). Gln31 provides a ligand contact to S-methyl-5'-thioadenosine. His62 and Asp86 together coordinate spermidine. S-methyl-5'-thioadenosine contacts are provided by residues Glu106 and 137-138; that span reads DG. The active-site Proton acceptor is the Asp155. 155 to 158 provides a ligand contact to spermidine; that stretch reads DSTE. Position 162 (Pro162) interacts with S-methyl-5'-thioadenosine.

This sequence belongs to the spermidine/spermine synthase family. In terms of assembly, homodimer or homotetramer.

It localises to the cytoplasm. The catalysed reaction is S-adenosyl 3-(methylsulfanyl)propylamine + putrescine = S-methyl-5'-thioadenosine + spermidine + H(+). It functions in the pathway amine and polyamine biosynthesis; spermidine biosynthesis; spermidine from putrescine: step 1/1. Functionally, catalyzes the irreversible transfer of a propylamine group from the amino donor S-adenosylmethioninamine (decarboxy-AdoMet) to putrescine (1,4-diaminobutane) to yield spermidine. The polypeptide is Polyamine aminopropyltransferase (Bacillus cereus (strain ATCC 10987 / NRS 248)).